The chain runs to 138 residues: uncharacterized protein (138 aa).

The next 3 helical transmembrane spans lie at I17–F37, F43–C63, and F117–L137.

The protein localises to the cell membrane. This is an uncharacterized protein from Mycoplasma genitalium (strain ATCC 33530 / DSM 19775 / NCTC 10195 / G37) (Mycoplasmoides genitalium).